The following is a 436-amino-acid chain: Testis-expressed protein 44 (436 aa).

2 stretches are compositionally biased toward acidic residues: residues 1–10 and 45–54; these read MTTEPLEDPE and LPDEVPPEDI. 2 disordered regions span residues 1–142 and 165–307; these read MTTE…LTSL and AENN…SLYG. Composition is skewed to polar residues over residues 81–103 and 167–195; these read ASMQ…TDTS and NNRT…TVSE. The segment covering 234 to 247 has biased composition (basic and acidic residues); sequence EPTKSADQEAEDFK. Residues 273 to 289 are compositionally biased toward pro residues; that stretch reads QAPPSPNSPADSPPPSP. The residue at position 375 (Ser375) is a Phosphoserine.

It localises to the cytoplasm. The protein is Testis-expressed protein 44 (Tex44) of Rattus norvegicus (Rat).